A 304-amino-acid chain; its full sequence is Acetyl-coenzyme A carboxylase carboxyl transferase subunit beta (304 aa).

Residues 23–292 (VWTKCDSCGQ…PNPEAPREGV (270 aa)) form the CoA carboxyltransferase N-terminal domain. 4 residues coordinate Zn(2+): Cys27, Cys30, Cys46, and Cys49. The C4-type zinc-finger motif lies at 27–49 (CDSCGQVLYRAELERNLEVCPKC). A disordered region spans residues 285-304 (PEAPREGVVVPPVPDQEPEA). The segment covering 295 to 304 (PPVPDQEPEA) has biased composition (pro residues).

The protein belongs to the AccD/PCCB family. As to quaternary structure, acetyl-CoA carboxylase is a heterohexamer composed of biotin carboxyl carrier protein (AccB), biotin carboxylase (AccC) and two subunits each of ACCase subunit alpha (AccA) and ACCase subunit beta (AccD). Requires Zn(2+) as cofactor.

It localises to the cytoplasm. The catalysed reaction is N(6)-carboxybiotinyl-L-lysyl-[protein] + acetyl-CoA = N(6)-biotinyl-L-lysyl-[protein] + malonyl-CoA. Its pathway is lipid metabolism; malonyl-CoA biosynthesis; malonyl-CoA from acetyl-CoA: step 1/1. Component of the acetyl coenzyme A carboxylase (ACC) complex. Biotin carboxylase (BC) catalyzes the carboxylation of biotin on its carrier protein (BCCP) and then the CO(2) group is transferred by the transcarboxylase to acetyl-CoA to form malonyl-CoA. This chain is Acetyl-coenzyme A carboxylase carboxyl transferase subunit beta, found in Escherichia coli O6:H1 (strain CFT073 / ATCC 700928 / UPEC).